We begin with the raw amino-acid sequence, 898 residues long: Translation initiation factor IF-2 (898 aa).

The disordered stretch occupies residues 51 to 302; sequence KEHGDATGSE…RKGRINKPMS (252 aa). Composition is skewed to basic and acidic residues over residues 100–164 and 171–230; these read SSVE…KRET and RSDE…KETV. Polar residues predominate over residues 234–245; the sequence is QENTDYHVTTSR. The segment covering 263–273 has biased composition (basic residues); it reads RRSTKANKRKM. Basic and acidic residues predominate over residues 274-286; the sequence is SSRDDNQERDSRP. The span at 287-297 shows a compositional bias: basic residues; sequence RGGKAGRKGRI. One can recognise a tr-type G domain in the interval 397 to 566; it reads SRAPVVTIMG…LLQAEVLELK (170 aa). The segment at 406-413 is G1; sequence GHVDHGKT. 406 to 413 is a binding site for GTP; it reads GHVDHGKT. The segment at 431–435 is G2; that stretch reads GITQH. The G3 stretch occupies residues 452–455; that stretch reads DTPG. Residues 452 to 456 and 506 to 509 each bind GTP; these read DTPGH and NKID. A G4 region spans residues 506 to 509; sequence NKID. The tract at residues 542–544 is G5; sequence SAK.

It belongs to the TRAFAC class translation factor GTPase superfamily. Classic translation factor GTPase family. IF-2 subfamily.

The protein localises to the cytoplasm. Functionally, one of the essential components for the initiation of protein synthesis. Protects formylmethionyl-tRNA from spontaneous hydrolysis and promotes its binding to the 30S ribosomal subunits. Also involved in the hydrolysis of GTP during the formation of the 70S ribosomal complex. This chain is Translation initiation factor IF-2, found in Vibrio cholerae serotype O1 (strain ATCC 39541 / Classical Ogawa 395 / O395).